The sequence spans 799 residues: Histidine biosynthesis trifunctional protein (799 aa).

Positions 1–229 (MVLPILPLID…FIVEQENVGF (229 aa)) are phosphoribosyl-AMP cyclohydrolase. Residues 230 to 312 (CHLETMSCFG…FYFALAKLVA (83 aa)) form a phosphoribosyl-ATP pyrophosphohydrolase region. Residues 313–799 (NDVSLKDVEN…KLGLIPKDFQ (487 aa)) are histidinol dehydrogenase. Positions 618 and 621 each coordinate Zn(2+). Active-site residues include Glu687 and His688. The Zn(2+) site is built by Asp721 and His780.

The protein in the C-terminal section; belongs to the histidinol dehydrogenase family. Zn(2+) serves as cofactor.

It catalyses the reaction 1-(5-phospho-beta-D-ribosyl)-5'-AMP + H2O = 1-(5-phospho-beta-D-ribosyl)-5-[(5-phospho-beta-D-ribosylamino)methylideneamino]imidazole-4-carboxamide. It carries out the reaction 1-(5-phospho-beta-D-ribosyl)-ATP + H2O = 1-(5-phospho-beta-D-ribosyl)-5'-AMP + diphosphate + H(+). The enzyme catalyses L-histidinol + 2 NAD(+) + H2O = L-histidine + 2 NADH + 3 H(+). It functions in the pathway amino-acid biosynthesis; L-histidine biosynthesis; L-histidine from 5-phospho-alpha-D-ribose 1-diphosphate: step 2/9. Its pathway is amino-acid biosynthesis; L-histidine biosynthesis; L-histidine from 5-phospho-alpha-D-ribose 1-diphosphate: step 3/9. It participates in amino-acid biosynthesis; L-histidine biosynthesis; L-histidine from 5-phospho-alpha-D-ribose 1-diphosphate: step 9/9. The chain is Histidine biosynthesis trifunctional protein from Saccharomyces cerevisiae (strain ATCC 204508 / S288c) (Baker's yeast).